We begin with the raw amino-acid sequence, 324 residues long: MPGLLRARRTDAVRLDAVTTFHLRHGVEVADALRVGRPVVALESTIVSHGLPRPDNLRVAREIEQTVRDAGAVPATIGMVAGQLVVGLDDAELTRLATVDDVAKLSVRDLAVAAATDADGATTVAATSAVAAAAGIRVFATGGLGGVHREAAQSFDESADLTTLARTPIAVVCAGVKSILDSGATLERLETLGVGVVGYRTRRFPGFYLTDGGFDLDWSVDSPEQVAAALAAQEQHGLHSGGLVVANPLPTDEQLDPALHDRTLAEGLMLLRREGVTGKAVTPFLLAHFHSATEGASLAVNIRIILRNADLAAQIAVASAARQA.

The active-site Proton donor is the Glu43. Residues Lys104 and Val124 each coordinate substrate. Residue Asp156 participates in Mn(2+) binding. Ser158–Asp160 is a substrate binding site. Lys177 acts as the Nucleophile in catalysis.

This sequence belongs to the pseudouridine-5'-phosphate glycosidase family. In terms of assembly, homotrimer. Mn(2+) is required as a cofactor.

The enzyme catalyses D-ribose 5-phosphate + uracil = psi-UMP + H2O. Functionally, catalyzes the reversible cleavage of pseudouridine 5'-phosphate (PsiMP) to ribose 5-phosphate and uracil. Functions biologically in the cleavage direction, as part of a pseudouridine degradation pathway. The sequence is that of Pseudouridine-5'-phosphate glycosidase from Salinispora tropica (strain ATCC BAA-916 / DSM 44818 / JCM 13857 / NBRC 105044 / CNB-440).